Here is a 135-residue protein sequence, read N- to C-terminus: uncharacterized protein (135 aa).

Residues 1–70 are disordered; it reads MKPDWPRRGA…RWRPQGTGTG (70 aa).

This is an uncharacterized protein from Homo sapiens (Human).